A 137-amino-acid polypeptide reads, in one-letter code: MLDKLENTFHFQQEALSLRNKRQEILAANIANADTPGFQARDIDFAAELKKTMENGRTGSHGLQLTMTSERHIPIKPGYRLEADLLYRVPHQTSMDGNTVDMDMERSNFADNSVKYQADVTFINSQVKSMMAVLQQG.

The protein belongs to the flagella basal body rod proteins family. As to quaternary structure, the basal body constitutes a major portion of the flagellar organelle and consists of a number of rings mounted on a central rod. In Gram-negative bacteria, at least four rings, L, P, S and M are present, whereas Gram-positive bacteria lack the L and P rings. The rod consists of about 26 subunits of FlgG in the distal portion, and FlgB, FlgC and FlgF build up the proximal portion of the rod with about 6 subunits each. Rod assembly occurs by export via the flagellum-specific pathway of its constituent proteins and by their incorporation into the rod structure in the probable order of FlgB, FlgC, FlgF and FlgG. Another protein, FliE, also assembles onto the stable rod structure.

Its subcellular location is the bacterial flagellum basal body. In terms of biological role, structural component of flagellum, the bacterial motility apparatus. Part of the rod structure of flagellar basal body. The chain is Flagellar basal body rod protein FlgB from Proteus mirabilis (strain HI4320).